The following is a 68-amino-acid chain: Small ribosomal subunit protein bS21 (68 aa).

Residues 37-49 (EKPSEKRAREKAA) show a composition bias toward basic and acidic residues. Residues 37-68 (EKPSEKRAREKAAAVRRARKMERKRMERDGIK) are disordered. The segment covering 50–59 (AVRRARKMER) has biased composition (basic residues).

This sequence belongs to the bacterial ribosomal protein bS21 family.

This Erythrobacter litoralis (strain HTCC2594) protein is Small ribosomal subunit protein bS21.